The following is an 81-amino-acid chain: ATP synthase subunit c (81 aa).

A run of 2 helical transmembrane segments spans residues 6–26 (AAAS…GPGI) and 57–77 (LAFM…LLFA).

Belongs to the ATPase C chain family. In terms of assembly, F-type ATPases have 2 components, F(1) - the catalytic core - and F(0) - the membrane proton channel. F(1) has five subunits: alpha(3), beta(3), gamma(1), delta(1), epsilon(1). F(0) has four main subunits: a(1), b(1), b'(1) and c(10-14). The alpha and beta chains form an alternating ring which encloses part of the gamma chain. F(1) is attached to F(0) by a central stalk formed by the gamma and epsilon chains, while a peripheral stalk is formed by the delta, b and b' chains.

The protein resides in the cellular thylakoid membrane. In terms of biological role, f(1)F(0) ATP synthase produces ATP from ADP in the presence of a proton or sodium gradient. F-type ATPases consist of two structural domains, F(1) containing the extramembraneous catalytic core and F(0) containing the membrane proton channel, linked together by a central stalk and a peripheral stalk. During catalysis, ATP synthesis in the catalytic domain of F(1) is coupled via a rotary mechanism of the central stalk subunits to proton translocation. Functionally, key component of the F(0) channel; it plays a direct role in translocation across the membrane. A homomeric c-ring of between 10-14 subunits forms the central stalk rotor element with the F(1) delta and epsilon subunits. The sequence is that of ATP synthase subunit c from Synechocystis sp. (strain ATCC 27184 / PCC 6803 / Kazusa).